We begin with the raw amino-acid sequence, 189 residues long: Cell division protein SepF (189 aa).

Disordered stretches follow at residues 1 to 75 (MEGQ…GLPG) and 155 to 174 (STPS…SPTP).

Belongs to the SepF family. As to quaternary structure, homodimer. Interacts with FtsZ.

It is found in the cytoplasm. In terms of biological role, cell division protein that is part of the divisome complex and is recruited early to the Z-ring. Probably stimulates Z-ring formation, perhaps through the cross-linking of FtsZ protofilaments. Its function overlaps with FtsA. This Synechococcus sp. (strain JA-3-3Ab) (Cyanobacteria bacterium Yellowstone A-Prime) protein is Cell division protein SepF.